A 286-amino-acid chain; its full sequence is Single myb histone 5 (286 aa).

Positions 1 to 61 constitute an HTH myb-type domain; that stretch reads MGAPKQRWTS…KWRNMNVIVT (61 aa). The segment at residues 28 to 57 is a DNA-binding region (H-T-H motif); the sequence is WRMILNDPELSSTLRYRSNVDLKDKWRNMN. The region spanning 122-190 is the H15 domain; that stretch reads SHSRLDNIIM…KVNRKYRIAP (69 aa). The stretch at 229 to 277 forms a coiled coil; that stretch reads EAAAAAAAHAVAEAEAIMAEAEAAAREAEAAEAEARAAQAFAEAAVLTL.

This sequence belongs to the histone H1/H5 family. SMH subfamily. As to quaternary structure, forms a homodimer and heterodimers.

It localises to the nucleus. The protein localises to the chromosome. It is found in the nucleolus. Its subcellular location is the telomere. Its function is as follows. Binds preferentially double-stranded telomeric repeats, but may also bind to the single telomeric strand. This is Single myb histone 5 (SMH5) from Zea mays (Maize).